A 132-amino-acid polypeptide reads, in one-letter code: Bleomycin resistance protein (132 aa).

Residues methionine 1–glutamine 129 form the VOC domain.

Belongs to the bleomycin resistance protein family.

In terms of biological role, binding protein with a strong affinity to the bleomycin family of antibiotics. The protein is Bleomycin resistance protein (bleO) of Geobacillus stearothermophilus (Bacillus stearothermophilus).